The following is a 207-amino-acid chain: Thymidylate kinase (207 aa).

7-14 (GCEGTGKT) serves as a coordination point for ATP.

The protein belongs to the thymidylate kinase family.

It catalyses the reaction dTMP + ATP = dTDP + ADP. Its function is as follows. Phosphorylation of dTMP to form dTDP in both de novo and salvage pathways of dTTP synthesis. This is Thymidylate kinase from Onion yellows phytoplasma (strain OY-M).